The sequence spans 130 residues: Small ribosomal subunit protein uS8 (130 aa).

Belongs to the universal ribosomal protein uS8 family. Part of the 30S ribosomal subunit.

Its function is as follows. One of the primary rRNA binding proteins, it binds directly to 16S rRNA central domain where it helps coordinate assembly of the platform of the 30S subunit. This is Small ribosomal subunit protein uS8 from Halobacterium salinarum (strain ATCC 29341 / DSM 671 / R1).